The chain runs to 548 residues: uncharacterized protein (548 aa).

Residues 8-200 (KLFADMIIQG…LLCVYEGFLK (193 aa)) enclose the DhaL domain.

This is an uncharacterized protein from Staphylococcus aureus (strain bovine RF122 / ET3-1).